The sequence spans 200 residues: Glycerol-3-phosphate acyltransferase (200 aa).

5 helical membrane passes run 1-21, 53-73, 81-101, 114-134, and 139-159; these read MLLSSLLLLALGYLLGSMPNG, GPALVVFLLDVGKGALAVLLA, WVQVLAGLAALAGHIWPVWLG, MFLGLAWPVGLACLGLFMAVI, and IVSLSSVVAAIGLPVLMLTSG.

This sequence belongs to the PlsY family. As to quaternary structure, probably interacts with PlsX.

It is found in the cell inner membrane. It catalyses the reaction an acyl phosphate + sn-glycerol 3-phosphate = a 1-acyl-sn-glycero-3-phosphate + phosphate. It functions in the pathway lipid metabolism; phospholipid metabolism. Functionally, catalyzes the transfer of an acyl group from acyl-phosphate (acyl-PO(4)) to glycerol-3-phosphate (G3P) to form lysophosphatidic acid (LPA). This enzyme utilizes acyl-phosphate as fatty acyl donor, but not acyl-CoA or acyl-ACP. The sequence is that of Glycerol-3-phosphate acyltransferase from Synechococcus sp. (strain CC9902).